Reading from the N-terminus, the 66-residue chain is Large ribosomal subunit protein bL35 (66 aa).

The protein belongs to the bacterial ribosomal protein bL35 family.

This chain is Large ribosomal subunit protein bL35, found in Brucella canis (strain ATCC 23365 / NCTC 10854 / RM-666).